Reading from the N-terminus, the 119-residue chain is Large ribosomal subunit protein uL18 (119 aa).

The protein belongs to the universal ribosomal protein uL18 family. As to quaternary structure, part of the 50S ribosomal subunit; part of the 5S rRNA/L5/L18/L25 subcomplex. Contacts the 5S and 23S rRNAs.

This is one of the proteins that bind and probably mediate the attachment of the 5S RNA into the large ribosomal subunit, where it forms part of the central protuberance. This Borreliella afzelii (strain PKo) (Borrelia afzelii) protein is Large ribosomal subunit protein uL18.